Here is a 459-residue protein sequence, read N- to C-terminus: Cysteine--tRNA ligase (459 aa).

Residue Cys-31 coordinates Zn(2+). A 'HIGH' region motif is present at residues 33-43; that stretch reads PTVYDNPHIGN. The Zn(2+) site is built by Cys-216, His-241, and Glu-245. Positions 274–278 match the 'KMSKS' region motif; it reads KMSKS. Position 277 (Lys-277) interacts with ATP.

Belongs to the class-I aminoacyl-tRNA synthetase family. In terms of assembly, monomer. Requires Zn(2+) as cofactor.

It localises to the cytoplasm. The enzyme catalyses tRNA(Cys) + L-cysteine + ATP = L-cysteinyl-tRNA(Cys) + AMP + diphosphate. The polypeptide is Cysteine--tRNA ligase (Rickettsia massiliae (strain Mtu5)).